The chain runs to 348 residues: Protein RecA (348 aa).

64-71 (GPESSGKT) is an ATP binding site. The interval 328 to 348 (DTGGAAPAQEDEAQAQEELEF) is disordered. Residues 336–348 (QEDEAQAQEELEF) show a composition bias toward acidic residues.

Belongs to the RecA family.

The protein resides in the cytoplasm. Functionally, can catalyze the hydrolysis of ATP in the presence of single-stranded DNA, the ATP-dependent uptake of single-stranded DNA by duplex DNA, and the ATP-dependent hybridization of homologous single-stranded DNAs. It interacts with LexA causing its activation and leading to its autocatalytic cleavage. This is Protein RecA from Bacillus licheniformis (strain ATCC 14580 / DSM 13 / JCM 2505 / CCUG 7422 / NBRC 12200 / NCIMB 9375 / NCTC 10341 / NRRL NRS-1264 / Gibson 46).